Consider the following 478-residue polypeptide: Glycogen synthase (478 aa).

Residue Lys15 participates in ADP-alpha-D-glucose binding.

It belongs to the glycosyltransferase 1 family. Bacterial/plant glycogen synthase subfamily.

It catalyses the reaction [(1-&gt;4)-alpha-D-glucosyl](n) + ADP-alpha-D-glucose = [(1-&gt;4)-alpha-D-glucosyl](n+1) + ADP + H(+). The protein operates within glycan biosynthesis; glycogen biosynthesis. Its function is as follows. Synthesizes alpha-1,4-glucan chains using ADP-glucose. The sequence is that of Glycogen synthase from Streptococcus uberis (strain ATCC BAA-854 / 0140J).